A 254-amino-acid chain; its full sequence is Protein EFFECTOR OF TRANSCRIPTION 3 (254 aa).

The GIY-YIG domain occupies 103–152 (RCTGLYELGVGVIGQDQGQNFDPDNNVLGVYVGQCVDVKSRLQDYGRRGG).

The protein resides in the cytoplasm. In Arabidopsis thaliana (Mouse-ear cress), this protein is Protein EFFECTOR OF TRANSCRIPTION 3.